Here is a 672-residue protein sequence, read N- to C-terminus: Putative per-hexamer repeat protein 5 (672 aa).

Gly residues-rich tracts occupy residues 141–161, 171–191, 215–233, 243–263, 273–295, 303–355, and 365–389; these read TGTG…GTGT, TDRG…GTGT, TGTG…GTDT, and TGTG…GSGS. 2 disordered regions span residues 141–193 and 213–672; these read TGTG…GTGT and TGTG…TGTA. The segment covering 390 to 424 has biased composition (low complexity); sequence GTAKVTGTATTTATVTETGTAKVTGTDTGTAKVTG. A compositionally biased stretch (gly residues) spans 425 to 469; it reads TGTGTGTGTGTGTGTGTGTGTGTGTGTGTGTGTGTGTGTGTGSGS. The segment covering 470–486 has biased composition (low complexity); the sequence is GTAKVTGTDTGTAKVTG. A compositionally biased stretch (gly residues) spans 487 to 537; that stretch reads TGTGTGTGTGTGTGTGTGTGTGTGSGSGSGSGSGSGSGTGTGTGLGSGSGS. The span at 538 to 552 shows a compositional bias: low complexity; sequence GTAKVTGTGTAKVTG. Residues 553–617 show a composition bias toward gly residues; sequence TGTGTGTGTG…GTGTGTGTGT (65 aa). Low complexity predominate over residues 618-636; sequence GTSTVTVRGTGTGTATATG. Composition is skewed to gly residues over residues 637–653 and 663–672; these read TGTG…GTGT and RGTGTGTGTA.

The sequence is that of Putative per-hexamer repeat protein 5 (Phxr5) from Mus musculus (Mouse).